We begin with the raw amino-acid sequence, 146 residues long: Anti-sigma F factor (146 aa).

Belongs to the anti-sigma-factor family.

It carries out the reaction L-seryl-[protein] + ATP = O-phospho-L-seryl-[protein] + ADP + H(+). The catalysed reaction is L-threonyl-[protein] + ATP = O-phospho-L-threonyl-[protein] + ADP + H(+). In terms of biological role, binds to sigma F and blocks its ability to form an RNA polymerase holoenzyme (E-sigma F). Phosphorylates SpoIIAA on a serine residue. This phosphorylation may enable SpoIIAA to act as an anti-anti-sigma factor that counteracts SpoIIAB and thus releases sigma F from inhibition. This chain is Anti-sigma F factor, found in Bacillus cereus (strain ATCC 14579 / DSM 31 / CCUG 7414 / JCM 2152 / NBRC 15305 / NCIMB 9373 / NCTC 2599 / NRRL B-3711).